We begin with the raw amino-acid sequence, 320 residues long: Reticulocalbin-2 (320 aa).

Positions Met-1 to Ala-25 are cleaved as a signal peptide. EF-hand domains are found at residues Glu-64–His-99 and Tyr-100–Asp-135. Residues Asp-77, Asp-79, Asp-81, Glu-88, Asp-113, Asn-115, Asp-117, Thr-119, and Glu-124 each coordinate Ca(2+). Thr-140 bears the Phosphothreonine mark. 4 consecutive EF-hand domains span residues Phe-150–Glu-185, Met-189–Ala-224, Trp-230–Gly-265, and Ile-266–Ser-301. Residues Asp-167, Glu-176, Asp-202, Asn-204, Asp-206, Glu-213, Asp-243, Asp-245, Asp-247, Arg-249, Glu-254, Asp-279, Asn-281, Asp-283, Lys-285, and Glu-290 each contribute to the Ca(2+) site. Residues His-317 to Leu-320 carry the Prevents secretion from ER motif.

Belongs to the CREC family. In terms of assembly, binds the snake venom phospholipase complex taipoxin. As to expression, ubiquitous.

It localises to the endoplasmic reticulum lumen. Functionally, not known. Binds calcium. This Rattus norvegicus (Rat) protein is Reticulocalbin-2 (Rcn2).